The primary structure comprises 970 residues: Sodium/calcium exchanger 1 (970 aa).

An N-terminal signal peptide occupies residues methionine 1–alanine 32. Topologically, residues aspartate 33–lysine 71 are extracellular. Residue asparagine 41 is glycosylated (N-linked (GlcNAc...) asparagine). The chain crosses the membrane as a helical span at residues isoleucine 72 to isoleucine 92. Residues alanine 93–asparagine 133 lie on the Cytoplasmic side of the membrane. The helical transmembrane segment at leucine 134–cysteine 154 threads the bilayer. Residues alanine 138 to isoleucine 178 form an Alpha-1 repeat. At glycine 155 to threonine 167 the chain is on the extracellular side. An N-linked (GlcNAc...) asparagine glycan is attached at asparagine 157. The helical transmembrane segment at isoleucine 168–proline 188 threads the bilayer. Over aspartate 189–phenylalanine 201 the chain is Cytoplasmic. A helical membrane pass occupies residues phenylalanine 202–isoleucine 222. Residues serine 223–glutamate 228 are Extracellular-facing. A helical membrane pass occupies residues valine 229–alanine 249. The Cytoplasmic portion of the chain corresponds to aspartate 250–glycine 797. The putative calmodulin-binding region stretch occupies residues arginine 251–glycine 270. Phosphoserine is present on residues serine 282 and serine 389. 2 Calx-beta domains span residues valine 393–serine 493 and alanine 524–glycine 624. Residues glutamate 417, aspartate 453, aspartate 478, aspartate 479, isoleucine 481, glutamate 483, glutamate 486, aspartate 530, aspartate 531, aspartate 532, glutamate 548, aspartate 584, aspartate 610, glutamate 611, glutamate 612, and glutamate 715 each coordinate Ca(2+). A helical membrane pass occupies residues tryptophan 798–leucine 818. Residues alanine 819–histidine 821 are Extracellular-facing. A helical membrane pass occupies residues phenylalanine 822 to threonine 842. One copy of the Alpha-2 repeat lies at alanine 839 to valine 875. Residues serine 843 to asparagine 871 lie on the Cytoplasmic side of the membrane. A helical transmembrane segment spans residues alanine 872–alanine 892. Residues asparagine 893 to threonine 903 are Extracellular-facing. Residues leucine 904–tyrosine 924 form a helical membrane-spanning segment. Residues arginine 925–lysine 941 are Cytoplasmic-facing. The helical transmembrane segment at leucine 942–glutamate 962 threads the bilayer. Topologically, residues alanine 963–phenylalanine 970 are extracellular.

It belongs to the Ca(2+):cation antiporter (CaCA) (TC 2.A.19) family. SLC8 subfamily. In terms of tissue distribution, detected in heart (at protein level). Detected in heart.

The protein resides in the cell membrane. The enzyme catalyses Ca(2+)(in) + 3 Na(+)(out) = Ca(2+)(out) + 3 Na(+)(in). With respect to regulation, activated by micromolar levels of Ca(2+). Mediates the exchange of one Ca(2+) ion against three to four Na(+) ions across the cell membrane, and thereby contributes to the regulation of cytoplasmic Ca(2+) levels and Ca(2+)-dependent cellular processes. Contributes to Ca(2+) transport during excitation-contraction coupling in muscle. In a first phase, voltage-gated channels mediate the rapid increase of cytoplasmic Ca(2+) levels due to release of Ca(2+) stores from the endoplasmic reticulum. SLC8A1 mediates the export of Ca(2+) from the cell during the next phase, so that cytoplasmic Ca(2+) levels rapidly return to baseline. Required for normal embryonic heart development and the onset of heart contractions. The polypeptide is Sodium/calcium exchanger 1 (SLC8A1) (Felis catus (Cat)).